Consider the following 185-residue polypeptide: Ribosome-recycling factor (185 aa).

Belongs to the RRF family.

It localises to the cytoplasm. Responsible for the release of ribosomes from messenger RNA at the termination of protein biosynthesis. May increase the efficiency of translation by recycling ribosomes from one round of translation to another. This chain is Ribosome-recycling factor, found in Nitrosomonas eutropha (strain DSM 101675 / C91 / Nm57).